Here is a 370-residue protein sequence, read N- to C-terminus: Forkhead box protein J1.2 (370 aa).

Positions 45–74 are disordered; the sequence is ANSRPPVPRVSQGPCSPPAGDTASCQAPRT. The segment at residues 108–202 is a DNA-binding region (fork-head); the sequence is KPPYSYATLI…VNGVLKRRRM (95 aa). The disordered stretch occupies residues 227-246; the sequence is PGSHHMQHISGGHRQSRRYE.

It belongs to the FOXJ1 family.

The protein localises to the nucleus. In terms of biological role, key transcription factor required for motile ciliogenesis. Activates genes essential for motile cilia formation and function. In Xenopus laevis (African clawed frog), this protein is Forkhead box protein J1.2.